The primary structure comprises 178 residues: Bifunctional protein PyrR (178 aa).

The PRPP-binding motif lies at 99–111; the sequence is VVLVDDVIYTGRT.

This sequence belongs to the purine/pyrimidine phosphoribosyltransferase family. PyrR subfamily. In terms of assembly, homodimer and homohexamer; in equilibrium.

It catalyses the reaction UMP + diphosphate = 5-phospho-alpha-D-ribose 1-diphosphate + uracil. Functionally, regulates transcriptional attenuation of the pyrimidine nucleotide (pyr) operon by binding in a uridine-dependent manner to specific sites on pyr mRNA. This disrupts an antiterminator hairpin in the RNA and favors formation of a downstream transcription terminator, leading to a reduced expression of downstream genes. Its function is as follows. Also displays a weak uracil phosphoribosyltransferase activity which is not physiologically significant. The chain is Bifunctional protein PyrR from Thermoanaerobacter pseudethanolicus (strain ATCC 33223 / 39E) (Clostridium thermohydrosulfuricum).